The sequence spans 346 residues: Pyrophosphate--fructose 6-phosphate 1-phosphotransferase (346 aa).

G13 is a diphosphate binding site. Position 105 (E105) interacts with Mg(2+). Substrate is bound by residues 127-129 (TID), R164, 171-173 (MGR), E224, R269, and 275-278 (HLQR). Catalysis depends on D129, which acts as the Proton acceptor.

The protein belongs to the phosphofructokinase type A (PFKA) family. Mixed-substrate PFK group III subfamily. Homodimer. The cofactor is Mg(2+).

It is found in the cytoplasm. The catalysed reaction is beta-D-fructose 6-phosphate + diphosphate = beta-D-fructose 1,6-bisphosphate + phosphate + H(+). It participates in carbohydrate degradation; glycolysis; D-glyceraldehyde 3-phosphate and glycerone phosphate from D-glucose: step 3/4. Its activity is regulated as follows. Non-allosteric. Catalyzes the phosphorylation of D-fructose 6-phosphate, the first committing step of glycolysis. Uses inorganic phosphate (PPi) as phosphoryl donor instead of ATP like common ATP-dependent phosphofructokinases (ATP-PFKs), which renders the reaction reversible, and can thus function both in glycolysis and gluconeogenesis. Consistently, PPi-PFK can replace the enzymes of both the forward (ATP-PFK) and reverse (fructose-bisphosphatase (FBPase)) reactions. The chain is Pyrophosphate--fructose 6-phosphate 1-phosphotransferase from Dictyoglomus thermophilum.